A 469-amino-acid chain; its full sequence is Small ribosomal subunit protein mS29 (469 aa).

Leucine 150 lines the ATP pocket.

The protein belongs to the mitochondrion-specific ribosomal protein mS29 family. Component of the mitochondrial small ribosomal subunit (mt-SSU). Mature N.crassa 74S mitochondrial ribosomes consist of a small (37S) and a large (54S) subunit. The 37S small subunit contains a 16S ribosomal RNA (16S mt-rRNA) and 32 different proteins. The 54S large subunit contains a 23S rRNA (23S mt-rRNA) and 42 different proteins.

The protein resides in the mitochondrion. In terms of biological role, component of the mitochondrial ribosome (mitoribosome), a dedicated translation machinery responsible for the synthesis of mitochondrial genome-encoded proteins, including at least some of the essential transmembrane subunits of the mitochondrial respiratory chain. The mitoribosomes are attached to the mitochondrial inner membrane and translation products are cotranslationally integrated into the membrane. The polypeptide is Small ribosomal subunit protein mS29 (rsm23) (Neurospora crassa (strain ATCC 24698 / 74-OR23-1A / CBS 708.71 / DSM 1257 / FGSC 987)).